Reading from the N-terminus, the 131-residue chain is Small ribosomal subunit protein bS6 (131 aa).

The interval 98–131 (EASPMVKAKDERRERREDFANETADDSEAGDSEE) is disordered. Positions 104–116 (KAKDERRERREDF) are enriched in basic and acidic residues. A compositionally biased stretch (acidic residues) spans 120–131 (TADDSEAGDSEE).

The protein belongs to the bacterial ribosomal protein bS6 family.

In terms of biological role, binds together with bS18 to 16S ribosomal RNA. The polypeptide is Small ribosomal subunit protein bS6 (Klebsiella pneumoniae (strain 342)).